The following is a 376-amino-acid chain: Erythronate-4-phosphate dehydrogenase (376 aa).

Residues serine 45 and threonine 67 each coordinate substrate. Aspartate 147 provides a ligand contact to NAD(+). Arginine 209 is an active-site residue. Aspartate 233 lines the NAD(+) pocket. Glutamate 238 is an active-site residue. The active-site Proton donor is histidine 255. An NAD(+)-binding site is contributed by glycine 258. Tyrosine 259 is a substrate binding site.

This sequence belongs to the D-isomer specific 2-hydroxyacid dehydrogenase family. PdxB subfamily. Homodimer.

Its subcellular location is the cytoplasm. It catalyses the reaction 4-phospho-D-erythronate + NAD(+) = (R)-3-hydroxy-2-oxo-4-phosphooxybutanoate + NADH + H(+). Its pathway is cofactor biosynthesis; pyridoxine 5'-phosphate biosynthesis; pyridoxine 5'-phosphate from D-erythrose 4-phosphate: step 2/5. In terms of biological role, catalyzes the oxidation of erythronate-4-phosphate to 3-hydroxy-2-oxo-4-phosphonooxybutanoate. The polypeptide is Erythronate-4-phosphate dehydrogenase (Shewanella sp. (strain W3-18-1)).